A 1081-amino-acid chain; its full sequence is MPRRKQQAPRRAAAYVSDELKAAALVEDDVEPEEQAADGEPSAKYMCPEKELSKACPSYQNSPAAEFSSHEMDSESHISETSDRMADFESSSIKNEEETKEVQVPLEDTTVSDSLEQMKAVYNNFLSNSYWSNLNLNLHQPSSENNGGSSSSSSSSSSSCGSGSFDWHQSAMAKTLQQVSQNRMLPEPSLFSTVQLYRQSSKLYGSIFTGASKFRCKDCSAAYDTLVELTVHMNETGHYRDDNHETDNNNPKRWSKPRKRSLLEMEGKEDAQKVLKCMYCGHSFESLQDLSVHMIKTKHYQKVPLKEPVTPVAAKIIPAARKKPSLELELPSSPDSTGGTPKATLSDASDALQKNSNPYITPNNRYGHQNGASYAWHFEARKSQILKCMECGSSHDTLQELTAHMMVTGHFIKVTNSAMKKGKPIMETPVTPTITTLLDEKVQSVPLAATTFTSPSNTPASVSPKLAVEIKKEVDKEKAVPDEKPKEREKPSEEEEKYDISSKYHYLTENDLEESPKGGLDILKSLENTVTSAINKAQNGTPSWGGYPSIHAAYQLPNMMKLSLGSSGKSTPLKPMFGNSEIVSPTKTQTLVSPPSSQTSPMPKTNFHAMEELVKKVTEKVAKVEEKMKEPEGKLSPPKRATPSPCSSEQSEPIKMEASSDGSFKSQENSPSPPRDACKEASPSAEPVENGKELVKPLSGGLSGSTAIITDHPPEQPFVNPLSALQSVMNIHLGKAAKPSLPALDPMSMLFKMSNSLAEKAAVATPPPLQAKKAEHLDRYFYHVNNDQPIDLTKGKSDKGCSLGSGLLSPTSTSPATSSSTVTTAKTSAVVSFMSNSPLRENALSDISDMLKNLTESHTSKSSTPSSISEKSDIDGATLEEAEESTPAQKRKGRQSNWNPQHLLILQAQFAASLRQTSEGKYIMSDLSPQERMHISRFTGLSMTTISHWLANVKYQLRRTGGTKFLKNLDTGHPVFFCNDCASQIRTPSTYISHLESHLGFRLRDLSKLSTEQINNQIAQTKSPSEKLVTSSPEEDLGTTYQCKLCNRTFASKHAVKLHLSKTHGKSPEDHLLFVSELEKQ.

Disordered regions lie at residues 25-104 (LVED…EVQV), 141-161 (PSSE…SSCG), and 238-257 (HYRD…WSKP). A compositionally biased stretch (acidic residues) spans 26–37 (VEDDVEPEEQAA). The span at 68 to 87 (SSHEMDSESHISETSDRMAD) shows a compositional bias: basic and acidic residues. 2 C2H2-type zinc fingers span residues 214–238 (FRCK…ETGH) and 275–299 (LKCM…KTKH). A compositionally biased stretch (basic and acidic residues) spans 238 to 247 (HYRDDNHETD). The interval 325–346 (SLELELPSSPDSTGGTPKATLS) is disordered. A C2H2-type 3; atypical zinc finger spans residues 387 to 410 (KCMECGSSHDTLQELTAHMMVTGH). Positions 474–491 (VDKEKAVPDEKPKEREKP) are enriched in basic and acidic residues. Disordered stretches follow at residues 474–499 (VDKE…EKYD), 626–699 (EKMK…KPLS), 792–824 (LTKG…TVTT), and 855–897 (TESH…RQSN). Residues 606-630 (NFHAMEELVKKVTEKVAKVEEKMKE) adopt a coiled-coil conformation. Polar residues predominate over residues 660 to 670 (SDGSFKSQENS). Ser682 carries the phosphoserine modification. Low complexity-rich tracts occupy residues 800-824 (GCSL…TVTT) and 856-869 (ESHT…SSIS). A DNA-binding region (homeobox; atypical) is located at residues 891-961 (RKGRQSNWNP…NVKYQLRRTG (71 aa)). 2 C2H2-type zinc fingers span residues 976–998 (FFCN…LESH) and 1041–1064 (YQCK…SKTH).

This sequence belongs to the teashirt C2H2-type zinc-finger protein family. Interacts (via N-terminus) with HDAC1 and HDAC2; the interaction is direct. Found in a trimeric complex with APBB1 and HDAC1; the interaction between HDAC1 and APBB1 is mediated by TSHZ3. Interacts (via homeobox domain) with APBB1 (via PID domain 1). As to expression, expressed in corticostriatal neurons.

The protein resides in the nucleus. It localises to the cell projection. It is found in the growth cone. Transcriptional regulator involved in developmental processes. Functions in association with APBB1, SET and HDAC factors as a transcriptional repressor, that inhibits the expression of CASP4. TSHZ3-mediated transcription repression involves the recruitment of histone deacetylases HDAC1 and HDAC2. Associates with chromatin in a region surrounding the CASP4 transcriptional start site(s). Regulates the development of neurons involved in both respiratory rhythm and airflow control. Promotes maintenance of nucleus ambiguus (nA) motoneurons, which govern upper airway function, and establishes a respiratory rhythm generator (RRG) activity compatible with survival at birth. Involved in the differentiation of the proximal uretic smooth muscle cells during developmental processes. Involved in the up-regulation of myocardin, that directs the expression of smooth muscle cells in the proximal ureter. Involved in the modulation of glutamatergic synaptic transmission and long-term synaptic potentiation. The sequence is that of Teashirt homolog 3 (Tshz3) from Mus musculus (Mouse).